Reading from the N-terminus, the 417-residue chain is Serine hydroxymethyltransferase (417 aa).

(6S)-5,6,7,8-tetrahydrofolate contacts are provided by residues leucine 121 and 125–127 (GHL). At lysine 229 the chain carries N6-(pyridoxal phosphate)lysine. (6S)-5,6,7,8-tetrahydrofolate is bound at residue 355–357 (SPF).

It belongs to the SHMT family. In terms of assembly, homodimer. Pyridoxal 5'-phosphate is required as a cofactor.

The protein localises to the cytoplasm. The enzyme catalyses (6R)-5,10-methylene-5,6,7,8-tetrahydrofolate + glycine + H2O = (6S)-5,6,7,8-tetrahydrofolate + L-serine. It functions in the pathway one-carbon metabolism; tetrahydrofolate interconversion. It participates in amino-acid biosynthesis; glycine biosynthesis; glycine from L-serine: step 1/1. Its function is as follows. Catalyzes the reversible interconversion of serine and glycine with tetrahydrofolate (THF) serving as the one-carbon carrier. This reaction serves as the major source of one-carbon groups required for the biosynthesis of purines, thymidylate, methionine, and other important biomolecules. Also exhibits THF-independent aldolase activity toward beta-hydroxyamino acids, producing glycine and aldehydes, via a retro-aldol mechanism. The polypeptide is Serine hydroxymethyltransferase (Citrobacter koseri (strain ATCC BAA-895 / CDC 4225-83 / SGSC4696)).